Consider the following 232-residue polypeptide: Thiamine import ATP-binding protein ThiQ (232 aa).

The 229-residue stretch at 2-230 folds into the ABC transporter domain; it reads LKLTDITWLY…KASASALLGI (229 aa). An ATP-binding site is contributed by 32–39; sequence GPSGAGKS.

Belongs to the ABC transporter superfamily. Thiamine importer (TC 3.A.1.19.1) family. As to quaternary structure, the complex is composed of two ATP-binding proteins (ThiQ), two transmembrane proteins (ThiP) and a solute-binding protein (ThiB).

The protein localises to the cell inner membrane. The catalysed reaction is thiamine(out) + ATP + H2O = thiamine(in) + ADP + phosphate + H(+). Its function is as follows. Part of the ABC transporter complex ThiBPQ involved in thiamine import. Responsible for energy coupling to the transport system. The chain is Thiamine import ATP-binding protein ThiQ from Escherichia coli (strain K12).